The following is a 214-amino-acid chain: Large ribosomal subunit protein uL3 (214 aa).

The tract at residues 133 to 155 is disordered; it reads ATHGNSRSHRVPGSTGQCQSPGR. Gln151 is modified (N5-methylglutamine).

It belongs to the universal ribosomal protein uL3 family. In terms of assembly, part of the 50S ribosomal subunit. Forms a cluster with proteins L14 and L19. In terms of processing, methylated by PrmB.

In terms of biological role, one of the primary rRNA binding proteins, it binds directly near the 3'-end of the 23S rRNA, where it nucleates assembly of the 50S subunit. This is Large ribosomal subunit protein uL3 from Cellvibrio japonicus (strain Ueda107) (Pseudomonas fluorescens subsp. cellulosa).